Consider the following 26-residue polypeptide: Beta-hexosaminidase (26 aa).

Glycosylated. As to expression, detected in dry seeds and cotyledons.

It catalyses the reaction Hydrolysis of terminal non-reducing N-acetyl-D-hexosamine residues in N-acetyl-beta-D-hexosaminides.. Inhibited by AgNO(3) at a concentration of 0.1 mM. Strongly inhibited by CdCl(2), ZnCl(2) and FeCl(3) and moderately by CoCl(2), CuSO(4) and NiCl(2) at 10 mM concentration. CaCl(2), MgCl(2), MnSO(4) and KI also have a slight inhibitory effect of 20%-25% at 10 mM concentration. Activated to a small extent by MgCl(2) at 0.1 mM concentration but inhibited with increasing concentration. Not affected by carbohydrates such as fucose, galactose and glucose but displays a slight decrease in activity up to 25% with lactose, alpha-mannose and N-acetyl-galactosamine (GalNAc). Functionally, has hexosaminidase activity. Active with both p-nitrophenyl-beta-D-N-acetylglucosamine (pNP-GlcNAc) and p-nitrophenyl-beta-D-N-acetylgalactosamine (pNP-GalNAc). Not active toward p-nitrophenyl-beta-D-N,N'-diacetylchitobiose (pNP-(GlcNAc)2) or p-nitrophenyl-beta-D-N,N',N''-triacetylchitobiose (pNP-(GlcNAc)3). Removes terminal GlcNAc and may be involved in storage protein degradation. This chain is Beta-hexosaminidase, found in Lupinus albus (White lupine).